We begin with the raw amino-acid sequence, 449 residues long: Chromosomal replication initiator protein DnaA (449 aa).

The domain I, interacts with DnaA modulators stretch occupies residues 1–71; sequence MPSSLWKHCL…LLSHYSSGRI (71 aa). Residues 71–112 are domain II; sequence IEKALLEVGSCSLQPQPHIQAVELTSKSARSSSRVVDRIPES. The tract at residues 113 to 329 is domain III, AAA+ region; sequence RLNKNYTFDS…GALRRVIAYS (217 aa). Positions 157, 159, 160, and 161 each coordinate ATP. Residues 330-449 form a domain IV, binds dsDNA region; it reads RFTHRPITME…YHNLLKKLST (120 aa).

It belongs to the DnaA family. Oligomerizes as a right-handed, spiral filament on DNA at oriC.

The protein resides in the cytoplasm. In terms of biological role, plays an essential role in the initiation and regulation of chromosomal replication. ATP-DnaA binds to the origin of replication (oriC) to initiate formation of the DNA replication initiation complex once per cell cycle. Binds the DnaA box (a 9 base pair repeat at the origin) and separates the double-stranded (ds)DNA. Forms a right-handed helical filament on oriC DNA; dsDNA binds to the exterior of the filament while single-stranded (ss)DNA is stabiized in the filament's interior. The ATP-DnaA-oriC complex binds and stabilizes one strand of the AT-rich DNA unwinding element (DUE), permitting loading of DNA polymerase. After initiation quickly degrades to an ADP-DnaA complex that is not apt for DNA replication. Binds acidic phospholipids. In Nitrosococcus oceani (strain ATCC 19707 / BCRC 17464 / JCM 30415 / NCIMB 11848 / C-107), this protein is Chromosomal replication initiator protein DnaA.